We begin with the raw amino-acid sequence, 559 residues long: Poly [ADP-ribose] polymerase 2 (559 aa).

A disordered region spans residues 1–58 (MAPRRQRSGSGRRVLNEAKKVDNGNKATEDDSPPGKKMRTCQRKGPMAGGKDADRTKD). The segment at 1-83 (MAPRRQRSGS…VDPECAAKLG (83 aa)) is N-terminal region (NTR). The span at 14–29 (VLNEAKKVDNGNKATE) shows a compositional bias: basic and acidic residues. Short sequence motifs (nuclear localization signal) lie at residues 19-20 (KK) and 33-39 (PPGKKMR). N6-(ADP-ribosyl)lysine; alternate occurs at positions 36 and 37. Lys36 and Lys37 each carry N6-acetyllysine; alternate. The 98-residue stretch at 84–181 (KAHVYCEGDD…ENFEKVPGKY (98 aa)) folds into the WGR domain. A PARP alpha-helical domain is found at 207 to 324 (ESQLDLRVQE…DIEIALKLVK (118 aa)). Ser208 is modified (phosphoserine). Residues 332 to 559 (HPLDQHYRNL…KIQFNFLQLW (228 aa)) enclose the PARP catalytic domain. NAD(+) is bound by residues 404–406 (HGS), Gly413, Arg420, and Ser446. Residue Glu534 is the For poly [ADP-ribose] polymerase activity of the active site.

The protein belongs to the ARTD/PARP family. In terms of assembly, component of a base excision repair (BER) complex, containing at least XRCC1, PARP1, POLB and LRIG3. Homo- and heterodimer with PARP1. Interacts (via the PARP catalytic domain) with HPF1. Interacts with core nucleosomes. In terms of processing, auto poly-ADP-ribosylated on serine residues, leading to dissociation of the PARP2-HPF1 complex from chromatin. Poly-ADP-ribosylated by PARP1. Post-translationally, acetylation reduces DNA binding and enzymatic activity. Proteolytically cleaved by caspase-8 (CASP8) in response to apoptosis, leading to its inactivation. As to expression, widely expressed; the highest levels were in testis followed by ovary. Expression is correlated with proliferation, with higher levels occurring during early fetal development and organogenesis and in the highly proliferative cell compartments of adult.

It is found in the nucleus. Its subcellular location is the chromosome. It catalyses the reaction NAD(+) + (ADP-D-ribosyl)n-acceptor = nicotinamide + (ADP-D-ribosyl)n+1-acceptor + H(+).. The enzyme catalyses L-seryl-[protein] + NAD(+) = O-(ADP-D-ribosyl)-L-seryl-[protein] + nicotinamide + H(+). It carries out the reaction L-aspartyl-[protein] + NAD(+) = 4-O-(ADP-D-ribosyl)-L-aspartyl-[protein] + nicotinamide. The catalysed reaction is L-glutamyl-[protein] + NAD(+) = 5-O-(ADP-D-ribosyl)-L-glutamyl-[protein] + nicotinamide. With respect to regulation, ADP-ribosyltransferase activity is regulated via an allosteric activation mechanism. In absence of activation signal, PARP2 is autoinhibited by the PARP alpha-helical domain (also named HD region), which prevents effective NAD(+)-binding. Activity is highly stimulated by signals, which unfold the PARP alpha-helical domain, relieving autoinhibition. Poly-ADP-ribosyltransferase activity is tightly regulated and PARP2 is removed from damaged chromatin following initial poly-ADP-ribosylation of chromatin to avoid prolonged residence (trapping) that has cytotoxic consequences. CHD1L promotes PARP2 removal from chromatin. Functionally, poly-ADP-ribosyltransferase that mediates poly-ADP-ribosylation of proteins and plays a key role in DNA repair. Mediates glutamate, aspartate or serine ADP-ribosylation of proteins: the ADP-D-ribosyl group of NAD(+) is transferred to the acceptor carboxyl group of target residues and further ADP-ribosyl groups are transferred to the 2'-position of the terminal adenosine moiety, building up a polymer with an average chain length of 20-30 units. Serine ADP-ribosylation of proteins constitutes the primary form of ADP-ribosylation of proteins in response to DNA damage. Mediates glutamate and aspartate ADP-ribosylation of target proteins in absence of HPF1. Following interaction with HPF1, catalyzes serine ADP-ribosylation of target proteins; HPF1 conferring serine specificity by completing the PARP2 active site. PARP2 initiates the repair of double-strand DNA breaks: recognizes and binds DNA breaks within chromatin and recruits HPF1, licensing serine ADP-ribosylation of target proteins, such as histones, thereby promoting decompaction of chromatin and the recruitment of repair factors leading to the reparation of DNA strand breaks. HPF1 initiates serine ADP-ribosylation but restricts the polymerase activity of PARP2 in order to limit the length of poly-ADP-ribose chains. Specifically mediates formation of branched poly-ADP-ribosylation. Branched poly-ADP-ribose chains are specifically recognized by some factors, such as APLF. In addition to proteins, also able to ADP-ribosylate DNA: preferentially acts on 5'-terminal phosphates at DNA strand breaks termini in nicked duplex. In Mus musculus (Mouse), this protein is Poly [ADP-ribose] polymerase 2 (Parp2).